Here is a 600-residue protein sequence, read N- to C-terminus: MVNNMTDLTAQEPAWQTRDHLDDPVIGELRNRFGPDAFTVQATRTGVPVVWIKREQLLEVGDFLKKLPKPYVMLFDLHGMDERLRTHREGLPAADFSVFYHLISIDRNRDIMLKVALAENDLHVPTFTKLFPNANWYERETWDLFGITFDGHPNLRRIMMPQTWKGHPLRKDYPARATEFSPFELTKAKQDLEMEALTFKPEEWGMKRGTENEDFMFLNLGPNHPSAHGAFRIVLQLDGEEIVDCVPDIGYHHRGAEKMGERQSWHSYIPYTDRIEYLGGCVNEMPYVLAVEKLAGITVPDRVNVIRVMLSELFRINSHLLYISTFIQDVGAMTPVFFAFTDRQKIYDLVEAITGFRMHPAWFRIGGVAHDLPRGWDRLLREFLDWMPKRLASYEKAALQNTILKGRSQGVAAYGAKEALEWGTTGAGLRATGIDFDVRKARPYSGYENFDFEIPVGGGVSDCYTRVMLKVEELRQSLRILEQCLNNMPEGPFKADHPLTTPPPKERTLQHIETLITHFLQVSWGPVMPANESFQMIEATKGINSYYLTSDGSTISYRTRIRTPSYAHLQQIPAAIRGSLVSDLIVYLGSIDFVMSDVDR.

Residues 1–190 (MVNNMTDLTA…SPFELTKAKQ (190 aa)) form an NADH dehydrogenase I subunit C region. Positions 214–600 (DFMFLNLGPN…IDFVMSDVDR (387 aa)) are NADH dehydrogenase I subunit D.

This sequence in the N-terminal section; belongs to the complex I 30 kDa subunit family. The protein in the C-terminal section; belongs to the complex I 49 kDa subunit family. In terms of assembly, NDH-1 is composed of 13 different subunits. Subunits NuoB, CD, E, F, and G constitute the peripheral sector of the complex.

Its subcellular location is the cell inner membrane. The catalysed reaction is a quinone + NADH + 5 H(+)(in) = a quinol + NAD(+) + 4 H(+)(out). Its function is as follows. NDH-1 shuttles electrons from NADH, via FMN and iron-sulfur (Fe-S) centers, to quinones in the respiratory chain. The immediate electron acceptor for the enzyme in this species is believed to be ubiquinone. Couples the redox reaction to proton translocation (for every two electrons transferred, four hydrogen ions are translocated across the cytoplasmic membrane), and thus conserves the redox energy in a proton gradient. This Shigella boydii serotype 18 (strain CDC 3083-94 / BS512) protein is NADH-quinone oxidoreductase subunit C/D.